A 238-amino-acid polypeptide reads, in one-letter code: Demethylmenaquinone methyltransferase (238 aa).

Residues threonine 65, aspartate 85, and 109 to 110 (DA) contribute to the S-adenosyl-L-methionine site.

This sequence belongs to the class I-like SAM-binding methyltransferase superfamily. MenG/UbiE family.

It carries out the reaction a 2-demethylmenaquinol + S-adenosyl-L-methionine = a menaquinol + S-adenosyl-L-homocysteine + H(+). It functions in the pathway quinol/quinone metabolism; menaquinone biosynthesis; menaquinol from 1,4-dihydroxy-2-naphthoate: step 2/2. Methyltransferase required for the conversion of demethylmenaquinol (DMKH2) to menaquinol (MKH2). This is Demethylmenaquinone methyltransferase from Roseiflexus sp. (strain RS-1).